The chain runs to 308 residues: N-acetyl-gamma-glutamyl-phosphate reductase (308 aa).

The active site involves C117.

It belongs to the NAGSA dehydrogenase family. Type 2 subfamily.

The protein resides in the cytoplasm. It carries out the reaction N-acetyl-L-glutamate 5-semialdehyde + phosphate + NADP(+) = N-acetyl-L-glutamyl 5-phosphate + NADPH + H(+). Its pathway is amino-acid biosynthesis; L-arginine biosynthesis; N(2)-acetyl-L-ornithine from L-glutamate: step 3/4. Its function is as follows. Catalyzes the NADPH-dependent reduction of N-acetyl-5-glutamyl phosphate to yield N-acetyl-L-glutamate 5-semialdehyde. This Sinorhizobium fredii (strain NBRC 101917 / NGR234) protein is N-acetyl-gamma-glutamyl-phosphate reductase.